A 361-amino-acid chain; its full sequence is Monodechloroaminopyrrolnitrin synthase PrnB (361 aa).

222–225 contacts substrate; sequence PGAV. A heme-binding site is contributed by His-313. Substrate contacts are provided by Tyr-321 and Ser-332.

Belongs to the PrnB family. Monomer. Heme b serves as cofactor.

It carries out the reaction 7-chloro-L-tryptophan + AH2 + O2 = monodechloroaminopyrrolnitrin + A + CO2 + 2 H2O. It functions in the pathway antibiotic biosynthesis. Its function is as follows. Involved in the biosynthesis of the antifungal antibiotic pyrrolnitrin. Catalyzes the ring rearrangement and decarboxylation to convert 7-chloro-L-tryptophan (7-CLT) to monodechloroaminopyrrolnitrin (MDA). It can also use 7-chloro-D-tryptophan, but 7-chloro-L-tryptophan is the preferred natural enantiomer. The polypeptide is Monodechloroaminopyrrolnitrin synthase PrnB (prnB) (Pseudomonas fluorescens).